Here is a 516-residue protein sequence, read N- to C-terminus: Cytochrome P450 monooxygenase otaC (516 aa).

The helical transmembrane segment at 13-30 threads the bilayer; that stretch reads FLWTAFAVGVVYCCTRMV. A heme-binding site is contributed by Cys-454.

Belongs to the cytochrome P450 family. Heme is required as a cofactor.

The protein resides in the membrane. It carries out the reaction 7-methylmellein + 3 reduced [NADPH--hemoprotein reductase] + 3 O2 = 7-carboxymellein + 3 oxidized [NADPH--hemoprotein reductase] + 4 H2O + 4 H(+). It participates in mycotoxin biosynthesis. Cytochrome P450 monooxygenase; part of the gene cluster that mediates the biosynthesis of ochratoxin A (OTA), a mycotoxin composed of a chlorinated type I polyketide dihydroisocoumarin moiety linked to L-phenylalanine, and demonstrated to have nephrotoxic, immunotoxic, genotoxic, neurotoxic, and teratogenic properties. OtaC catalyzes the oxidation of 7-methylmellein (7-MM) into 7-carboxymellein. The pathway begins with the highly reducing polyketide synthase otaA that catalyzes the formation of the isocoumarin group during the initial stages of biosynthesis, starting from one acetate and 4 malonate units, to originate the characteristic pentaketide skeleton 7-methylmellein (7-MM) of the OTA molecule. The newly identified cyclase otaY might be involved in the polyketide cyclization reaction during the initial steps of the OTA biosynthesis. 7-MM is then oxidized into 7-carboxymellein (also called ochratoxin beta) by the cytochrome P450 monooxygenase otaC. The NRPS encoded by the otaB gene is involved in the linking of phenylalanine to the dihydroisocoumarin ring. The reaction catalyzed by NRPS results in the production of ochratoxin B (OTB), which is the non-chlorinated analog of OTA and which subsequently serves as the substrate of the halogenase otaD for chlorination activity to form the final molecular structure of OTA, containing a chlorine atom in the C-5 position of the molecule. The protein is Cytochrome P450 monooxygenase otaC of Aspergillus carbonarius (strain ITEM 5010).